The primary structure comprises 196 residues: Ribonuclease HII (196 aa).

The 188-residue stretch at 9-196 (GLVCGIDEAG…GPVARQLSLL (188 aa)) folds into the RNase H type-2 domain. D15, E16, and D107 together coordinate a divalent metal cation.

It belongs to the RNase HII family. Mn(2+) is required as a cofactor. The cofactor is Mg(2+).

The protein localises to the cytoplasm. It carries out the reaction Endonucleolytic cleavage to 5'-phosphomonoester.. Its function is as follows. Endonuclease that specifically degrades the RNA of RNA-DNA hybrids. The sequence is that of Ribonuclease HII from Dechloromonas aromatica (strain RCB).